Consider the following 829-residue polypeptide: Periplasmic nitrate reductase (829 aa).

A signal peptide (tat-type signal) is located at residues 1-30; that stretch reads MKMTRRAFVKANAAASAAAVAGITLPASAA. The 4Fe-4S Mo/W bis-MGD-type domain occupies 41-97; sequence ITWDKAPCRFCGTGCSVLVGTQNGKVVATQGDPEAPVNKGLNCIKGYFLSKIMYGQD. [4Fe-4S] cluster is bound by residues Cys48, Cys51, Cys55, and Cys83. Mo-bis(molybdopterin guanine dinucleotide)-binding positions include Lys85, Gln152, Asn177, Cys181, 214–221, 245–249, 264–266, Met374, Gln378, Asn484, 510–511, Lys533, Asp560, and 718–727; these read WGSNMAEM, STYYH, QSD, SD, and TGRVLEHWHT. Phe794 is a binding site for substrate. Mo-bis(molybdopterin guanine dinucleotide)-binding residues include Asn802 and Lys819.

It belongs to the prokaryotic molybdopterin-containing oxidoreductase family. NasA/NapA/NarB subfamily. As to quaternary structure, component of the periplasmic nitrate reductase NapAB complex composed of NapA and NapB. The cofactor is [4Fe-4S] cluster. Mo-bis(molybdopterin guanine dinucleotide) serves as cofactor. Post-translationally, predicted to be exported by the Tat system. The position of the signal peptide cleavage has not been experimentally proven.

The protein resides in the periplasm. The catalysed reaction is 2 Fe(II)-[cytochrome] + nitrate + 2 H(+) = 2 Fe(III)-[cytochrome] + nitrite + H2O. Functionally, catalytic subunit of the periplasmic nitrate reductase complex NapAB. Receives electrons from NapB and catalyzes the reduction of nitrate to nitrite. The chain is Periplasmic nitrate reductase from Vibrio parahaemolyticus serotype O3:K6 (strain RIMD 2210633).